The following is a 149-amino-acid chain: Transcriptional repressor NrdR (149 aa).

A zinc finger spans residues 3–34 (CPFCTAVDTKVIDSRLVGDGSQVRRRRQCLVC). The 91-residue stretch at 49–139 (PRVVKSDEIR…VYRSFEDVRD (91 aa)) folds into the ATP-cone domain.

This sequence belongs to the NrdR family. Zn(2+) is required as a cofactor.

In terms of biological role, negatively regulates transcription of bacterial ribonucleotide reductase nrd genes and operons by binding to NrdR-boxes. This Proteus mirabilis (strain HI4320) protein is Transcriptional repressor NrdR.